The following is a 209-amino-acid chain: dITP/XTP pyrophosphatase (209 aa).

A substrate-binding site is contributed by Thr-7 to Lys-12. Asp-73 (proton acceptor) is an active-site residue. A Mg(2+)-binding site is contributed by Asp-73. Substrate-binding positions include Ser-74, Phe-155–Asp-158, Lys-178, and His-183–Arg-184.

It belongs to the HAM1 NTPase family. In terms of assembly, homodimer. The cofactor is Mg(2+).

The enzyme catalyses XTP + H2O = XMP + diphosphate + H(+). It carries out the reaction dITP + H2O = dIMP + diphosphate + H(+). It catalyses the reaction ITP + H2O = IMP + diphosphate + H(+). Functionally, pyrophosphatase that catalyzes the hydrolysis of nucleoside triphosphates to their monophosphate derivatives, with a high preference for the non-canonical purine nucleotides XTP (xanthosine triphosphate), dITP (deoxyinosine triphosphate) and ITP. Seems to function as a house-cleaning enzyme that removes non-canonical purine nucleotides from the nucleotide pool, thus preventing their incorporation into DNA/RNA and avoiding chromosomal lesions. This Sulfurovum sp. (strain NBC37-1) protein is dITP/XTP pyrophosphatase.